Reading from the N-terminus, the 306-residue chain is uncharacterized protein (306 aa).

Positions 287 to 306 are disordered; sequence DEEGKSEDAKRQEEEKKKSS.

Belongs to the aldo/keto reductase family.

It is found in the cytoplasm. It localises to the nucleus. This is an uncharacterized protein from Schizosaccharomyces pombe (strain 972 / ATCC 24843) (Fission yeast).